The primary structure comprises 127 residues: Large ribosomal subunit protein bL12 (127 aa).

Residues Val101–Lys127 are disordered. The span at Val105–Leu117 shows a compositional bias: basic and acidic residues.

This sequence belongs to the bacterial ribosomal protein bL12 family. In terms of assembly, homodimer. Part of the ribosomal stalk of the 50S ribosomal subunit. Forms a multimeric L10(L12)X complex, where L10 forms an elongated spine to which 2 to 4 L12 dimers bind in a sequential fashion. Binds GTP-bound translation factors.

Functionally, forms part of the ribosomal stalk which helps the ribosome interact with GTP-bound translation factors. Is thus essential for accurate translation. In Geobacter metallireducens (strain ATCC 53774 / DSM 7210 / GS-15), this protein is Large ribosomal subunit protein bL12.